We begin with the raw amino-acid sequence, 185 residues long: Lactoylglutathione lyase (185 aa).

The disordered stretch occupies residues 1–21; sequence MAAEPKESPSNNPGLHTTPDE. Residues 27–174 form the VOC domain; the sequence is IMQQTMFRIK…DGYWIEIFDR (148 aa). Substrate-binding residues include Q30 and R34. Q30 provides a ligand contact to Zn(2+). Position 96 (E96) interacts with Zn(2+). Residues N100, R120, H124, and 154-155 each bind substrate; that span reads KM. H124 lines the Zn(2+) pocket. E170 lines the Zn(2+) pocket. The Proton donor/acceptor role is filled by E170.

The protein belongs to the glyoxalase I family. In terms of assembly, homodimer. Zn(2+) serves as cofactor.

It catalyses the reaction (R)-S-lactoylglutathione = methylglyoxal + glutathione. It functions in the pathway secondary metabolite metabolism; methylglyoxal degradation; (R)-lactate from methylglyoxal: step 1/2. Functionally, catalyzes the conversion of hemimercaptal, formed from methylglyoxal and glutathione, to S-lactoylglutathione. Active toward the hemithioacetal adducts formed by reacting methylglyoxal or phenylglyoxal with glutathione, homoglutathione or gamma-glutamylcysteine, showing no preference for homoglutathione adducts over glutathione adducts. This Glycine max (Soybean) protein is Lactoylglutathione lyase (GLXI).